The primary structure comprises 112 residues: FK506-binding protein 1 (112 aa).

The segment covering 1-10 has biased composition (polar residues); it reads MSAPATTQVE. A disordered region spans residues 1–20; that stretch reads MSAPATTQVEILQEGDGKTF. The PPIase FKBP-type domain maps to 24 to 112; it reads GDLVTIHYTG…LFDVELLNVN (89 aa).

It belongs to the FKBP-type PPIase family. FKBP1 subfamily.

Its subcellular location is the cytoplasm. The catalysed reaction is [protein]-peptidylproline (omega=180) = [protein]-peptidylproline (omega=0). Its activity is regulated as follows. Inhibited by both FK506 and rapamycin. Functionally, PPIases accelerate the folding of proteins. It catalyzes the cis-trans isomerization of proline imidic peptide bonds in oligopeptides. This Debaryomyces hansenii (strain ATCC 36239 / CBS 767 / BCRC 21394 / JCM 1990 / NBRC 0083 / IGC 2968) (Yeast) protein is FK506-binding protein 1 (FPR1).